A 201-amino-acid chain; its full sequence is Recombination protein RecR (201 aa).

The C4-type zinc-finger motif lies at 60–75; sequence CSCCGNVDTIDPCTVC. The Toprim domain occupies 83–178; that stretch reads SMIIVVEDVS…KTTRLAHGVP (96 aa).

The protein belongs to the RecR family.

Functionally, may play a role in DNA repair. It seems to be involved in an RecBC-independent recombinational process of DNA repair. It may act with RecF and RecO. The chain is Recombination protein RecR from Allorhizobium ampelinum (strain ATCC BAA-846 / DSM 112012 / S4) (Agrobacterium vitis (strain S4)).